The following is a 101-amino-acid chain: Large ribosomal subunit protein uL23 (101 aa).

This sequence belongs to the universal ribosomal protein uL23 family. As to quaternary structure, part of the 50S ribosomal subunit. Contacts protein L29, and trigger factor when it is bound to the ribosome.

Its function is as follows. One of the early assembly proteins it binds 23S rRNA. One of the proteins that surrounds the polypeptide exit tunnel on the outside of the ribosome. Forms the main docking site for trigger factor binding to the ribosome. In Kocuria rhizophila (strain ATCC 9341 / DSM 348 / NBRC 103217 / DC2201), this protein is Large ribosomal subunit protein uL23.